Here is a 213-residue protein sequence, read N- to C-terminus: Ribonuclease HII (213 aa).

Positions 1-206 constitute an RNase H type-2 domain; it reads MICGVDEAGK…VSTLLAKKTQ (206 aa). Positions 6, 7, and 101 each coordinate a divalent metal cation.

This sequence belongs to the RNase HII family. It depends on Mn(2+) as a cofactor. Mg(2+) serves as cofactor.

It localises to the cytoplasm. It carries out the reaction Endonucleolytic cleavage to 5'-phosphomonoester.. Functionally, endonuclease that specifically degrades the RNA of RNA-DNA hybrids. The polypeptide is Ribonuclease HII (Methanoregula boonei (strain DSM 21154 / JCM 14090 / 6A8)).